The chain runs to 142 residues: COA8 family protein Y39B6A.34, mitochondrial (142 aa).

This sequence belongs to the COA8 family.

Its subcellular location is the mitochondrion inner membrane. In terms of biological role, may be required for cytochrome c complex (COX) assembly and function, COX being the terminal component of the mitochondrial respiratory chain. This chain is COA8 family protein Y39B6A.34, mitochondrial, found in Caenorhabditis elegans.